The sequence spans 147 residues: Angiogenin (147 aa).

Positions 1-24 are cleaved as a signal peptide; it reads MVMGLGVLLLVFVLGLGLTPPTLA. Glutamine 25 is modified (pyrrolidone carboxylic acid). Catalysis depends on histidine 37, which acts as the Proton acceptor. Positions 45 and 46 each coordinate tRNA. Intrachain disulfides connect cysteine 50–cysteine 105, cysteine 63–cysteine 116, and cysteine 81–cysteine 131. Positions 55-59 match the Nucleolar localization signal motif; the sequence is RRRGL. The tRNA site is built by cysteine 105 and valine 127. Histidine 138 serves as the catalytic Proton donor.

Belongs to the pancreatic ribonuclease family. As to quaternary structure, homodimer. Interacts with RNH1; inhibiting ANG ribonuclease activity. Interacts with PCNA.

It localises to the secreted. Its subcellular location is the nucleus. The protein resides in the nucleolus. It is found in the cytoplasm. The protein localises to the stress granule. With respect to regulation, has weak tRNA ribonuclease activity by itself due to partial autoinhibition by its C-terminus, which folds into a short alpha-helix that partially occludes the substrate-binding site. In absence of stress, the ribonuclease activity is inhibited by RNH1 in the cytoplasm. In response to stress, dissociates from RNH1 in the cytoplasm and associates with cytoplasmic ribosomes with vacant A-sites: ribosomes directly activate the tRNA ribonuclease activity of ANG by refolding the C-terminal alpha-helix. In response to stress, the angiogenic activity of ANG is inhibited by RNH1 in the nucleus. Functionally, secreted ribonuclease that can either promote or restrict cell proliferation of target cells, depending on the context. Endocytosed in target cells via its receptor PLXNB2 and translocates to the cytoplasm or nucleus. Under stress conditions, localizes to the cytoplasm and promotes the assembly of stress granules (SGs): specifically cleaves a subset of tRNAs within anticodon loops to produce tRNA-derived stress-induced fragments (tiRNAs), resulting in translation repression and inhibition of cell proliferation. tiRNas also prevent formation of apoptosome, thereby promoting cell survival. Preferentially cleaves RNAs between a pyrimidine and an adenosine residue, suggesting that it cleaves the anticodon loop of tRNA(Ala) (32-UUAGCAU-38) after positions 33 and 36. Cleaves a subset of tRNAs, including tRNA(Ala), tRNA(Glu), tRNA(Gly), tRNA(Lys), tRNA(Val), tRNA(His), tRNA(Asp) and tRNA(Sec). Under growth conditions and in differentiated cells, translocates to the nucleus and stimulates ribosomal RNA (rRNA) transcription, including that containing the initiation site sequences of 45S rRNA, thereby promoting cell growth and proliferation. Angiogenin induces vascularization of normal and malignant tissues via its ability to promote rRNA transcription. Involved in hematopoietic stem and progenitor cell (HSPC) growth and survival by promoting rRNA transcription in growth conditions and inhibiting translation in response to stress, respectively. Mediates the crosstalk between myeloid and intestinal epithelial cells to protect the intestinal epithelial barrier integrity: secreted by myeloid cells and promotes intestinal epithelial cells proliferation and survival. Also mediates osteoclast-endothelial cell crosstalk in growing bone: produced by osteoclasts and protects the neighboring vascular cells against senescence by promoting rRNA transcription. The polypeptide is Angiogenin (ANG) (Gorilla gorilla gorilla (Western lowland gorilla)).